The following is a 199-amino-acid chain: NAD(P)H dehydrogenase (quinone) (199 aa).

The region spanning 4 to 190 is the Flavodoxin-like domain; that stretch reads VLVLYYSAYG…DGARYQGRKI (187 aa). Residues 10-15 and 78-80 each bind FMN; these read SAYGHI and TRF. Tyr-12 is an NAD(+) binding site. Trp-98 lines the substrate pocket. FMN contacts are provided by residues 113–119 and His-134; that span reads STATQHG.

This sequence belongs to the WrbA family. FMN is required as a cofactor.

It catalyses the reaction a quinone + NADH + H(+) = a quinol + NAD(+). The catalysed reaction is a quinone + NADPH + H(+) = a quinol + NADP(+). The chain is NAD(P)H dehydrogenase (quinone) from Xanthobacter autotrophicus (strain ATCC BAA-1158 / Py2).